The primary structure comprises 107 residues: UPF0145 protein LVIS_1527 (107 aa).

The protein belongs to the UPF0145 family.

This chain is UPF0145 protein LVIS_1527, found in Levilactobacillus brevis (strain ATCC 367 / BCRC 12310 / CIP 105137 / JCM 1170 / LMG 11437 / NCIMB 947 / NCTC 947) (Lactobacillus brevis).